A 444-amino-acid chain; its full sequence is uncharacterized protein (444 aa).

The residue at position 268 (Lys268) is an N6-(pyridoxal phosphate)lysine.

The protein belongs to the class-III pyridoxal-phosphate-dependent aminotransferase family. The cofactor is pyridoxal 5'-phosphate.

This is an uncharacterized protein from Bacillus subtilis (strain 168).